Here is a 207-residue protein sequence, read N- to C-terminus: MRGLFITLEGIEGSGKSTQIEMLYKRLKKDGFDVIITREPGGTPIGKEIRKLLLDPDNIMGAKAEFLLYAADRAQHVVELIKPALESGKVVLADRFIDSSIAYQGYGRGLDIDVVKTVNEWVIDGCWPDLTFVLDLDVEKGLERARGYSPDNQGDRLERELVTFHRRVRQAYHQLAEDRRFIMLDADRSREEIHREIYHKVKGCLIK.

Residue 10–17 (GIEGSGKS) participates in ATP binding.

Belongs to the thymidylate kinase family.

It catalyses the reaction dTMP + ATP = dTDP + ADP. Functionally, phosphorylation of dTMP to form dTDP in both de novo and salvage pathways of dTTP synthesis. This is Thymidylate kinase from Halothermothrix orenii (strain H 168 / OCM 544 / DSM 9562).